A 223-amino-acid polypeptide reads, in one-letter code: Ubiquitin carboxyl-terminal hydrolase isozyme L1 (223 aa).

Met1 carries the N-acetylmethionine modification. Positions 2–221 (QLKPMEINPE…VRFSAVALCK (220 aa)) constitute a UCH catalytic domain. Positions 5–10 (PMEINP) are interaction with ubiquitin. The active-site Nucleophile is Cys90. Ser125 is subject to Phosphoserine. Residue His161 is the Proton donor of the active site. The tract at residues 211–216 (EVRFSA) is interaction with ubiquitin. Cys220 is lipidated: S-farnesyl cysteine. Positions 221–223 (KCA) are cleaved as a propeptide — removed in mature form.

The protein belongs to the peptidase C12 family. In terms of assembly, monomer. Homodimer. Interacts with COPS5 and SNCA. In terms of processing, O-glycosylated.

The protein resides in the cytoplasm. It localises to the endoplasmic reticulum membrane. The catalysed reaction is Thiol-dependent hydrolysis of ester, thioester, amide, peptide and isopeptide bonds formed by the C-terminal Gly of ubiquitin (a 76-residue protein attached to proteins as an intracellular targeting signal).. Ubiquitin-protein hydrolase involved both in the processing of ubiquitin precursors and of ubiquitinated proteins. This enzyme is a thiol protease that recognizes and hydrolyzes a peptide bond at the C-terminal glycine of ubiquitin. Also binds to free monoubiquitin and may prevent its degradation in lysosomes. The homodimer may have ATP-independent ubiquitin ligase activity. The sequence is that of Ubiquitin carboxyl-terminal hydrolase isozyme L1 (UCHL1) from Monodelphis domestica (Gray short-tailed opossum).